The sequence spans 389 residues: Geodin cluster transcriptional coactivator gedD (389 aa).

In terms of domain architecture, HTH iclR-type spans 13–83; that stretch reads LAWHVQLLAC…QPGQIMHTPL (71 aa). A DNA-binding region (H-T-H motif) is located at residues 43 to 62; sequence VRDLAQLCGVSETTLSRVVR.

The protein resides in the nucleus. In terms of biological role, transcriptional coactivator; part of the gene cluster that mediates the biosynthesis of geodin, an intermediate in the biosynthesis of other natural products. With gedR, coregulates the production of geodin. This chain is Geodin cluster transcriptional coactivator gedD (gedD), found in Aspergillus terreus (strain NIH 2624 / FGSC A1156).